The following is a 488-amino-acid chain: E3 ubiquitin-protein ligase TRIM34 (488 aa).

Residues C15–G60 form an RING-type zinc finger. A B box-type zinc finger spans residues K92–E134. The Zn(2+) site is built by C97, H100, C119, and H125. Residues V131–C239 are a coiled coil. The B30.2/SPRY domain occupies L283–S488.

Belongs to the TRIM/RBCC family. In terms of assembly, homotrimer. Interacts (via B-box and SPRY domain) with TRIM5. (Microbial infection) Interacts (via the B30.2/SPRY domain) with HIV-1 capsid complexes. As to expression, is the most abundant form. It is highly expressed in the placenta, spleen, colon and peripheral blood leukocytes.

It localises to the cytoplasm. The protein resides in the mitochondrion. The catalysed reaction is S-ubiquitinyl-[E2 ubiquitin-conjugating enzyme]-L-cysteine + [acceptor protein]-L-lysine = [E2 ubiquitin-conjugating enzyme]-L-cysteine + N(6)-ubiquitinyl-[acceptor protein]-L-lysine.. It participates in protein modification; protein ubiquitination. Its function is as follows. Functions as antiviral protein and contributes to the defense against retroviral infections. Acts as a capsid-specific restriction factor with the help of TRIM5 and prevents infection from non-host-adapted retroviruses. During influenza A virus infection, promotes programmed cell death by targeting ZBP1 for 'Lys-63'-linked polyubiquitination. In turn, promotes ZBP1 recruitment of RIPK3 to mediate virus-induced programmed necrosis. Negatively regulates the function of mitochondria by enhancing mitochondrial depolarization leading to cytochrome c release and mitochondria-dependent apoptosis. Also promotes the formation of multinucleated giant cells by means of cell fusion and phagocytosis in epithelial cells. The protein is E3 ubiquitin-protein ligase TRIM34 (TRIM34) of Homo sapiens (Human).